The sequence spans 180 residues: Adenine phosphoribosyltransferase (180 aa).

It belongs to the purine/pyrimidine phosphoribosyltransferase family. Homodimer.

It localises to the cytoplasm. The catalysed reaction is AMP + diphosphate = 5-phospho-alpha-D-ribose 1-diphosphate + adenine. It functions in the pathway purine metabolism; AMP biosynthesis via salvage pathway; AMP from adenine: step 1/1. In terms of biological role, catalyzes a salvage reaction resulting in the formation of AMP, that is energically less costly than de novo synthesis. This Haemophilus influenzae (strain PittEE) protein is Adenine phosphoribosyltransferase.